Here is a 360-residue protein sequence, read N- to C-terminus: Uroporphyrinogen decarboxylase (360 aa).

Substrate is bound by residues R27–R31, F46, D77, Y154, T209, and H327.

This sequence belongs to the uroporphyrinogen decarboxylase family. As to quaternary structure, homodimer.

The protein localises to the cytoplasm. The catalysed reaction is uroporphyrinogen III + 4 H(+) = coproporphyrinogen III + 4 CO2. The protein operates within porphyrin-containing compound metabolism; protoporphyrin-IX biosynthesis; coproporphyrinogen-III from 5-aminolevulinate: step 4/4. Its function is as follows. Catalyzes the decarboxylation of four acetate groups of uroporphyrinogen-III to yield coproporphyrinogen-III. The protein is Uroporphyrinogen decarboxylase of Wigglesworthia glossinidia brevipalpis.